Consider the following 595-residue polypeptide: Putative terpenoid synthase 16 (595 aa).

The Mg(2+) site is built by Asp-349, Asp-353, Asn-494, and Asp-502. The DDXXD motif signature appears at 349–353 (DDTCD).

This sequence belongs to the terpene synthase family. Tpsa subfamily. It depends on Mg(2+) as a cofactor. Requires Mn(2+) as cofactor.

Its subcellular location is the cytoplasm. The protein operates within secondary metabolite biosynthesis; terpenoid biosynthesis. This is Putative terpenoid synthase 16 (TPS16) from Arabidopsis thaliana (Mouse-ear cress).